We begin with the raw amino-acid sequence, 310 residues long: Ribose-phosphate pyrophosphokinase (310 aa).

ATP-binding positions include 33–35 and 92–93; these read DGE and RQ. Residues H127 and D166 each coordinate Mg(2+). The active site involves K189. D-ribose 5-phosphate is bound by residues R191, D215, and 219-223; that span reads DTAGT.

Belongs to the ribose-phosphate pyrophosphokinase family. Class I subfamily. Homohexamer. Requires Mg(2+) as cofactor.

It is found in the cytoplasm. The catalysed reaction is D-ribose 5-phosphate + ATP = 5-phospho-alpha-D-ribose 1-diphosphate + AMP + H(+). It functions in the pathway metabolic intermediate biosynthesis; 5-phospho-alpha-D-ribose 1-diphosphate biosynthesis; 5-phospho-alpha-D-ribose 1-diphosphate from D-ribose 5-phosphate (route I): step 1/1. In terms of biological role, involved in the biosynthesis of the central metabolite phospho-alpha-D-ribosyl-1-pyrophosphate (PRPP) via the transfer of pyrophosphoryl group from ATP to 1-hydroxyl of ribose-5-phosphate (Rib-5-P). This chain is Ribose-phosphate pyrophosphokinase, found in Bordetella pertussis (strain Tohama I / ATCC BAA-589 / NCTC 13251).